The sequence spans 402 residues: Protochlorophyllide reductase B, chloroplastic (402 aa).

This sequence belongs to the short-chain dehydrogenases/reductases (SDR) family. POR subfamily.

Its subcellular location is the plastid. The protein resides in the chloroplast. It carries out the reaction chlorophyllide a + NADP(+) = protochlorophyllide a + NADPH + H(+). Its pathway is porphyrin-containing compound metabolism; chlorophyll biosynthesis. Functionally, phototransformation of protochlorophyllide (Pchlide) to chlorophyllide (Chlide). This is Protochlorophyllide reductase B, chloroplastic (PORB) from Oryza sativa subsp. japonica (Rice).